Here is a 523-residue protein sequence, read N- to C-terminus: Light-independent protochlorophyllide reductase subunit B (523 aa).

Asp-36 serves as a coordination point for [4Fe-4S] cluster. Asp-290 serves as the catalytic Proton donor. A substrate-binding site is contributed by 425–426 (GL).

It belongs to the ChlB/BchB/BchZ family. Protochlorophyllide reductase is composed of three subunits; ChlL, ChlN and ChlB. Forms a heterotetramer of two ChlB and two ChlN subunits. [4Fe-4S] cluster serves as cofactor.

It catalyses the reaction chlorophyllide a + oxidized 2[4Fe-4S]-[ferredoxin] + 2 ADP + 2 phosphate = protochlorophyllide a + reduced 2[4Fe-4S]-[ferredoxin] + 2 ATP + 2 H2O. The protein operates within porphyrin-containing compound metabolism; chlorophyll biosynthesis (light-independent). Functionally, component of the dark-operative protochlorophyllide reductase (DPOR) that uses Mg-ATP and reduced ferredoxin to reduce ring D of protochlorophyllide (Pchlide) to form chlorophyllide a (Chlide). This reaction is light-independent. The NB-protein (ChlN-ChlB) is the catalytic component of the complex. The polypeptide is Light-independent protochlorophyllide reductase subunit B (Prochlorococcus marinus (strain MIT 9301)).